The primary structure comprises 538 residues: Syncytin-1 (538 aa).

Positions 1–20 (MALPYHILLFTVLLPSFTLT) are cleaved as a signal peptide. Residues 21 to 443 (APPPCRCMTS…NTGPWGLLSQ (423 aa)) are Extracellular-facing. N-linked (GlcNAc...) asparagine glycosylation is present at Asn169. The CXXC signature appears at 186 to 189 (CWIC). 3 disulfide bridges follow: Cys186-Cys189, Cys186-Cys405, and Cys397-Cys404. Asn208, Asn214, Asn234, and Asn281 each carry an N-linked (GlcNAc...) asparagine glycan. The segment at 320-340 (ILPFVIGAGVLGALGTGIGGI) is fusion peptide. Residues 380–396 (LQNRRALDLLTAERGGT) are immunosuppression. A CX6CC motif is present at residues 397–405 (CLFLGEECC). Asn409 carries N-linked (GlcNAc...) asparagine glycosylation. The helical transmembrane segment at 444 to 464 (WMPWILPFLGPLAAIILLLLF) threads the bilayer. Residues 465-484 (GPCIFNLLVNFVSSRIEAVK) form an essential for the fusiogenic function region. Topologically, residues 465-538 (GPCIFNLLVN…LLRPNSAGSS (74 aa)) are cytoplasmic. The segment at 496–538 (KIYRRPLDRPASPRSDVNDIKCTPPEEISTAQPLLRPNSAGSS) is disordered.

It belongs to the gamma type-C retroviral envelope protein family. HERV class-I W env subfamily. The mature envelope protein (Env) consists of a trimer of SU-TM heterodimers attached probably by a labile interchain disulfide bond. Interacts with the C-type lectin CD209/DC-SIGN. In terms of processing, specific enzymatic cleavages in vivo yield mature proteins. Envelope glycoproteins are synthesized as an inactive precursor that is heavily N-glycosylated and processed likely by furin in the Golgi to yield the mature SU and TM proteins. The cleavage site between SU and TM requires the minimal sequence [KR]-X-[KR]-R. Post-translationally, the CXXC motif is highly conserved across a broad range of retroviral envelope proteins. It is thought to participate in the formation of a labile disulfide bond possibly with the CX6CC motif present in the transmembrane protein.

It localises to the cell membrane. The protein resides in the virion. Functionally, this endogenous retroviral envelope protein has retained its original fusogenic properties and participates in trophoblast fusion and the formation of a syncytium during placenta morphogenesis. May recognize and induce fusion through binding of SLC1A4 and SLC1A5. In terms of biological role, endogenous envelope proteins may have kept, lost or modified their original function during evolution. Retroviral envelope proteins mediate receptor recognition and membrane fusion during early infection. The surface protein (SU) mediates receptor recognition, while the transmembrane protein (TM) acts as a class I viral fusion protein. The protein may have at least 3 conformational states: pre-fusion native state, pre-hairpin intermediate state, and post-fusion hairpin state. During viral and target cell membrane fusion, the coiled coil regions (heptad repeats) assume a trimer-of-hairpins structure, positioning the fusion peptide in close proximity to the C-terminal region of the ectodomain. The formation of this structure appears to drive apposition and subsequent fusion of membranes. The sequence is that of Syncytin-1 (ERVW-1) from Gorilla gorilla gorilla (Western lowland gorilla).